The sequence spans 347 residues: S-adenosylmethionine:tRNA ribosyltransferase-isomerase (347 aa).

Belongs to the QueA family. As to quaternary structure, monomer.

The protein resides in the cytoplasm. It catalyses the reaction 7-aminomethyl-7-carbaguanosine(34) in tRNA + S-adenosyl-L-methionine = epoxyqueuosine(34) in tRNA + adenine + L-methionine + 2 H(+). It functions in the pathway tRNA modification; tRNA-queuosine biosynthesis. Transfers and isomerizes the ribose moiety from AdoMet to the 7-aminomethyl group of 7-deazaguanine (preQ1-tRNA) to give epoxyqueuosine (oQ-tRNA). The protein is S-adenosylmethionine:tRNA ribosyltransferase-isomerase of Pseudomonas aeruginosa (strain UCBPP-PA14).